We begin with the raw amino-acid sequence, 608 residues long: Glutamine--fructose-6-phosphate aminotransferase [isomerizing] (608 aa).

Cys-2 serves as the catalytic Nucleophile; for GATase activity. The region spanning 2–217 is the Glutamine amidotransferase type-2 domain; sequence CGIVGIVGHK…DGDWAVVGKT (216 aa). SIS domains lie at 283 to 422 and 456 to 598; these read TDID…ARGT and LSRE…VDQP. Residue Lys-603 is the For Fru-6P isomerization activity of the active site.

The protein resides in the cytoplasm. The catalysed reaction is D-fructose 6-phosphate + L-glutamine = D-glucosamine 6-phosphate + L-glutamate. Involved in the production of the root hair deformation (HAD) factor specifically on medicago. The protein is Glutamine--fructose-6-phosphate aminotransferase [isomerizing] (nodM) of Rhizobium leguminosarum bv. viciae.